The sequence spans 32 residues: Ferredoxin (32 aa).

Residues 3–32 (YKVRLLSEAEGIDVTIDCADDVYILDAAEE) form the 2Fe-2S ferredoxin-type domain.

It belongs to the 2Fe2S plant-type ferredoxin family. It depends on [2Fe-2S] cluster as a cofactor.

It localises to the plastid. It is found in the chloroplast. Ferredoxins are iron-sulfur proteins that transfer electrons in a wide variety of metabolic reactions. This chain is Ferredoxin, found in Porphyridium purpureum (Red alga).